A 456-amino-acid polypeptide reads, in one-letter code: Gamma-aminobutyric acid receptor subunit alpha-1 (456 aa).

Residues M1 to G27 form the signal peptide. Residues Q28–F253 are Extracellular-facing. N-linked (GlcNAc...) asparagine glycosylation occurs at N38. R94 provides a ligand contact to 4-aminobutanoate. N138 is a glycosylation site (N-linked (GlcNAc...) asparagine). T157 is a 4-aminobutanoate binding site. A disulfide bridge links C166 with C180. The helical transmembrane segment at V254–L274 threads the bilayer. Residues N275–V279 lie on the Cytoplasmic side of the membrane. A helical membrane pass occupies residues P280–R301. Residues N302–T311 are Extracellular-facing. A helical transmembrane segment spans residues A312 to T333. Over V334 to R421 the chain is Cytoplasmic. The chain crosses the membrane as a helical span at residues L422–T441. The Extracellular portion of the chain corresponds to Y442–Q456.

Belongs to the ligand-gated ion channel (TC 1.A.9) family. Gamma-aminobutyric acid receptor (TC 1.A.9.5) subfamily. GABRA1 sub-subfamily. In terms of assembly, heteropentamer, formed by a combination of alpha (GABRA1-6), beta (GABRB1-3), gamma (GABRG1-3), delta (GABRD), epsilon (GABRE), rho (GABRR1-3), pi (GABRP) and theta (GABRQ) subunits, each subunit exhibiting distinct physiological and pharmacological properties. Interacts with UBQLN1. Interacts with TRAK1. Interacts with KIF21B. Identified in a complex of 720 kDa composed of LHFPL4, NLGN2, GABRA1, GABRB2, GABRG2 and GABRB3. Interacts with LHFPL4. Interacts with NLGN2. Interacts with SHISA7; interaction leads to the regulation of GABA(A) receptor trafficking, channel deactivation kinetics and pharmacology.

Its subcellular location is the postsynaptic cell membrane. The protein resides in the cell membrane. The protein localises to the cytoplasmic vesicle membrane. It carries out the reaction chloride(in) = chloride(out). Allosterically activated by benzodiazepines, the neuroanesthetic alphaxalone and pentobarbital. Inhibited by the antagonist bicuculline. Potentiated by histamine. Functionally, alpha subunit of the heteropentameric ligand-gated chloride channel gated by gamma-aminobutyric acid (GABA), a major inhibitory neurotransmitter in the brain. GABA-gated chloride channels, also named GABA(A) receptors (GABAAR), consist of five subunits arranged around a central pore and contain GABA active binding site(s) located at the alpha and beta subunit interface(s). When activated by GABA, GABAARs selectively allow the flow of chloride anions across the cell membrane down their electrochemical gradient. Alpha-1/GABRA1-containing GABAARs are largely synaptic. Chloride influx into the postsynaptic neuron following GABAAR opening decreases the neuron ability to generate a new action potential, thereby reducing nerve transmission. GABAARs containing alpha-1 and beta-2 or -3 subunits exhibit synaptogenic activity; the gamma-2 subunit being necessary but not sufficient to induce rapid synaptic contacts formation. GABAARs function also as histamine receptor where histamine binds at the interface of two neighboring beta subunits and potentiates GABA response. GABAARs containing alpha, beta and epsilon subunits also permit spontaneous chloride channel activity while preserving the structural information required for GABA-gated openings. Alpha-1-mediated plasticity in the orbitofrontal cortex regulates context-dependent action selection. Together with rho subunits, may also control neuronal and glial GABAergic transmission in the cerebellum. The protein is Gamma-aminobutyric acid receptor subunit alpha-1 (GABRA1) of Macaca fascicularis (Crab-eating macaque).